The primary structure comprises 80 residues: Raniseptin-6 (80 aa).

A signal peptide spans 1 to 22 (MAFLKKSLFLVLFLGIVSLSIC). Residues 23–49 (EEEKREGEEEEKQEEENEELSEEELRE) constitute a propeptide that is removed on maturation.

This sequence belongs to the frog skin active peptide (FSAP) family. Dermaseptin subfamily. In terms of tissue distribution, expressed by the skin glands.

Its subcellular location is the secreted. In terms of biological role, has antibacterial activity. The sequence is that of Raniseptin-6 from Boana raniceps (Chaco tree frog).